A 220-amino-acid polypeptide reads, in one-letter code: NADH-quinone oxidoreductase subunit I (220 aa).

4Fe-4S ferredoxin-type domains are found at residues 71 to 102 (LQRLLDSGSERCIGCGLCEKICTSNCIRIITH) and 112 to 141 (DSYTINLGRCIYCGLCAEVCPELAIVMGNR). C82, C85, C88, C92, C121, C124, C127, and C131 together coordinate [4Fe-4S] cluster. Positions 189–220 (ATPLDYVQEPSKEESKKETPTSPEANKGDENV) are disordered. Positions 198 to 207 (PSKEESKKET) are enriched in basic and acidic residues.

This sequence belongs to the complex I 23 kDa subunit family. As to quaternary structure, NDH-1 is composed of 14 different subunits. Subunits NuoA, H, J, K, L, M, N constitute the membrane sector of the complex. [4Fe-4S] cluster is required as a cofactor.

The protein localises to the cell inner membrane. The catalysed reaction is a quinone + NADH + 5 H(+)(in) = a quinol + NAD(+) + 4 H(+)(out). NDH-1 shuttles electrons from NADH, via FMN and iron-sulfur (Fe-S) centers, to quinones in the respiratory chain. The immediate electron acceptor for the enzyme in this species is believed to be ubiquinone. Couples the redox reaction to proton translocation (for every two electrons transferred, four hydrogen ions are translocated across the cytoplasmic membrane), and thus conserves the redox energy in a proton gradient. The protein is NADH-quinone oxidoreductase subunit I of Helicobacter acinonychis (strain Sheeba).